Reading from the N-terminus, the 363-residue chain is Chorismate synthase (363 aa).

Arginine 48 and arginine 54 together coordinate NADP(+). Residues 125-127 (RSS), 238-239 (NA), glycine 278, 293-297 (KPTSS), and arginine 319 contribute to the FMN site.

It belongs to the chorismate synthase family. As to quaternary structure, homotetramer. The cofactor is FMNH2.

The enzyme catalyses 5-O-(1-carboxyvinyl)-3-phosphoshikimate = chorismate + phosphate. Its pathway is metabolic intermediate biosynthesis; chorismate biosynthesis; chorismate from D-erythrose 4-phosphate and phosphoenolpyruvate: step 7/7. Functionally, catalyzes the anti-1,4-elimination of the C-3 phosphate and the C-6 proR hydrogen from 5-enolpyruvylshikimate-3-phosphate (EPSP) to yield chorismate, which is the branch point compound that serves as the starting substrate for the three terminal pathways of aromatic amino acid biosynthesis. This reaction introduces a second double bond into the aromatic ring system. This chain is Chorismate synthase, found in Acidithiobacillus ferrooxidans (strain ATCC 23270 / DSM 14882 / CIP 104768 / NCIMB 8455) (Ferrobacillus ferrooxidans (strain ATCC 23270)).